A 294-amino-acid polypeptide reads, in one-letter code: Diaminopimelate epimerase (294 aa).

Substrate is bound by residues Asn11 and Asn78. Cys87 serves as the catalytic Proton donor. Substrate contacts are provided by residues 88–89, Asn167, Asn203, and 221–222; these read GN and ER. The Proton acceptor role is filled by Cys230. Position 231 to 232 (231 to 232) interacts with substrate; that stretch reads GT.

The protein belongs to the diaminopimelate epimerase family. Homodimer.

It is found in the cytoplasm. The catalysed reaction is (2S,6S)-2,6-diaminopimelate = meso-2,6-diaminopimelate. Its pathway is amino-acid biosynthesis; L-lysine biosynthesis via DAP pathway; DL-2,6-diaminopimelate from LL-2,6-diaminopimelate: step 1/1. Functionally, catalyzes the stereoinversion of LL-2,6-diaminopimelate (L,L-DAP) to meso-diaminopimelate (meso-DAP), a precursor of L-lysine and an essential component of the bacterial peptidoglycan. The polypeptide is Diaminopimelate epimerase (Mycolicibacterium paratuberculosis (strain ATCC BAA-968 / K-10) (Mycobacterium paratuberculosis)).